Reading from the N-terminus, the 52-residue chain is PGLSCRFYQHKFPEVEDVVMVNVRSIAEMGAYVSLLEYNNIEGRILLSELSR.

In terms of domain architecture, S1 motif spans glutamate 16–arginine 52. Serine 48 is modified (phosphoserine; by HRI). Phosphoserine is present on serine 51.

This sequence belongs to the eIF-2-alpha family. In terms of assembly, eukaryotic translation initiation factor 2 eIF2 is a heterotrimeric complex composed of an alpha (EIF2S1), a beta (EIF2S2) and a gamma (EIF2S3) chain. eIF2 is member of the 43S pre-initiation complex (43S PIC). eIF2 forms a complex with at least CELF1/CUGBP1, CALR, CALR3, EIF2S1, EIF2S2, HSP90B1 and HSPA5. Interaction with METAP2 protects EIF2S1 from inhibitory phosphorylation. Interacts with ABCF1. Associates with ribosomes. Interacts with DDX3X in an RNA-independent manner. In terms of processing, phosphorylation at Ser-48 and Ser-51 stabilizes the eIF-2/GDP/eIF2B complex and prevents GDP/GTP exchange reaction, thus impairing the recycling of eIF-2 between successive rounds of initiation and leading to global inhibition of translation, while concomitantly initiating the preferential translation of integrated stress response (ISR)-specific mRNAs. Substrate for at least 4 kinases: EIF2AK1/HRI, EIF2AK2/PKR, EIF2AK3/PERK and EIF2AK4/GCN2. Phosphorylation on Ser-51 by the EIF2AK4/GCN2 protein kinase occurs in response to amino acid starvation and UV irradiation. Phosphorylation at Ser-51 by the EIF2AK3/PERK protein kinase occurs in response to the unfolded protein response. Phosphorylation at Ser-51 by EIF2AK1/HRI in response to mitochondrial damage promotes relocalization to the mitochondrial surface.

The protein localises to the cytoplasm. The protein resides in the stress granule. It localises to the cytosol. It is found in the mitochondrion. Its activity is regulated as follows. Activity is regulated by phosphorylation at Ser-49 and Ser-52, which stabilizes the eIF2/GDP/eIF2B complex and prevents the eIF2B-mediated exchange of GDP for GTP, thereby preventing the formation of the 43S pre-initiation complex (43S PIC). This results in the global attenuation of 5' cap-dependent protein synthesis and concomitant translation of ISR-specific mRNAs that contain a short upstream open reading frame (uORF) in their 5' UTR, such as ATF4, ATF5, DDIT3/CHOP and PPP1R15A/GADD34. Its function is as follows. Member of the eIF2 complex that functions in the early steps of protein synthesis by forming a ternary complex with GTP and initiator tRNA. This complex binds to a 40S ribosomal subunit, followed by mRNA binding to form a 43S pre-initiation complex. Junction of the 60S ribosomal subunit to form the 80S initiation complex is preceded by hydrolysis of the GTP bound to eIF2 and release of an eIF2-GDP binary complex. In order for eIF2 to recycle and catalyze another round of initiation, the GDP bound to eIF2 must exchange with GTP by way of a reaction catalyzed by eIF2B. EIF2S1/eIF2-alpha is a key component of the integrated stress response (ISR), required for adaptation to various stress: phosphorylation by metabolic-stress sensing protein kinases (EIF2AK1/HRI, EIF2AK2/PKR, EIF2AK3/PERK and EIF2AK4/GCN2) in response to stress converts EIF2S1/eIF2-alpha in a global protein synthesis inhibitor, leading to a attenuation of cap-dependent translation, while concomitantly initiating the preferential translation of ISR-specific mRNAs, such as the transcriptional activators ATF4 and QRICH1, and hence allowing ATF4- and QRICH1-mediated reprogramming. EIF2S1/eIF2-alpha also acts as an activator of mitophagy in response to mitochondrial damage: phosphorylation by EIF2AK1/HRI promotes relocalization to the mitochondrial surface, thereby triggering PRKN-independent mitophagy. The chain is Eukaryotic translation initiation factor 2 subunit 1 (EIF2S1) from Oryctolagus cuniculus (Rabbit).